A 450-amino-acid polypeptide reads, in one-letter code: UDP-N-acetylmuramoylalanine--D-glutamate ligase (450 aa).

ATP is bound at residue Gly119–Thr125.

It belongs to the MurCDEF family.

It is found in the cytoplasm. The enzyme catalyses UDP-N-acetyl-alpha-D-muramoyl-L-alanine + D-glutamate + ATP = UDP-N-acetyl-alpha-D-muramoyl-L-alanyl-D-glutamate + ADP + phosphate + H(+). It functions in the pathway cell wall biogenesis; peptidoglycan biosynthesis. Functionally, cell wall formation. Catalyzes the addition of glutamate to the nucleotide precursor UDP-N-acetylmuramoyl-L-alanine (UMA). The chain is UDP-N-acetylmuramoylalanine--D-glutamate ligase from Streptococcus pneumoniae (strain JJA).